Here is a 207-residue protein sequence, read N- to C-terminus: Dephospho-CoA kinase (207 aa).

The region spanning 10–207 is the DPCK domain; sequence ILGLTGGIGS…FYLTLKGGQP (198 aa). 18-23 is a binding site for ATP; it reads GSGKSA.

Belongs to the CoaE family.

The protein resides in the cytoplasm. The enzyme catalyses 3'-dephospho-CoA + ATP = ADP + CoA + H(+). Its pathway is cofactor biosynthesis; coenzyme A biosynthesis; CoA from (R)-pantothenate: step 5/5. Its function is as follows. Catalyzes the phosphorylation of the 3'-hydroxyl group of dephosphocoenzyme A to form coenzyme A. This Pseudomonas putida (strain ATCC 47054 / DSM 6125 / CFBP 8728 / NCIMB 11950 / KT2440) protein is Dephospho-CoA kinase.